Consider the following 660-residue polypeptide: Galactocerebrosidase (660 aa).

An N-terminal signal peptide occupies residues 1–18 (MQTHNFLCIISVILGCSA). T87 and W129 together coordinate substrate. N147 carries an N-linked (GlcNAc...) asparagine glycan. N175 provides a ligand contact to substrate. The Proton donor/acceptor role is filled by E176. E251 acts as the Nucleophile in catalysis. A disulfide bond links C264 and C371. 2 N-linked (GlcNAc...) asparagine glycosylation sites follow: N293 and N356. Substrate is bound at residue R373. N-linked (GlcNAc...) asparagine glycans are attached at residues N413, N465, N495, N499, N537, and N578.

Belongs to the glycosyl hydrolase 59 family.

The protein resides in the lysosome. It catalyses the reaction a beta-D-galactosyl-(1&lt;-&gt;1')-N-acylsphing-4-enine + H2O = an N-acylsphing-4-enine + D-galactose. The enzyme catalyses beta-D-galactosyl-(1&lt;-&gt;1)-sphing-4-enine + H2O = sphing-4-enine + D-galactose. It carries out the reaction a D-galactosylceramide + H2O = an N-acyl-sphingoid base + D-galactose. Its function is as follows. Hydrolyzes the galactose ester bonds of glycolipids such as galactosylceramide and galactosylsphingosine. This is Galactocerebrosidase from Danio rerio (Zebrafish).